A 539-amino-acid chain; its full sequence is CTP synthase (539 aa).

Positions 1 to 268 are amidoligase domain; that stretch reads MSFKSIFLTG…SDFLLNKLGF (268 aa). Ser-14 is a binding site for CTP. Ser-14 provides a ligand contact to UTP. Residue 15 to 20 coordinates ATP; that stretch reads SLGKGL. An L-glutamine-binding site is contributed by Tyr-55. Asp-72 provides a ligand contact to ATP. 2 residues coordinate Mg(2+): Asp-72 and Glu-142. CTP-binding positions include 149 to 151, 188 to 193, and Lys-224; these read DIE and KTKPTQ. UTP is bound by residues 188–193 and Lys-224; that span reads KTKPTQ. The Glutamine amidotransferase type-1 domain maps to 294–532; it reads RIGLVGKYLE…IRAAKAYSLE (239 aa). Gly-353 serves as a coordination point for L-glutamine. Residue Cys-380 is the Nucleophile; for glutamine hydrolysis of the active site. Residues 381–384, Glu-404, and Arg-460 contribute to the L-glutamine site; that span reads LGMQ. Catalysis depends on residues His-505 and Glu-507.

This sequence belongs to the CTP synthase family. In terms of assembly, homotetramer.

The catalysed reaction is UTP + L-glutamine + ATP + H2O = CTP + L-glutamate + ADP + phosphate + 2 H(+). It carries out the reaction L-glutamine + H2O = L-glutamate + NH4(+). The enzyme catalyses UTP + NH4(+) + ATP = CTP + ADP + phosphate + 2 H(+). It participates in pyrimidine metabolism; CTP biosynthesis via de novo pathway; CTP from UDP: step 2/2. Allosterically activated by GTP, when glutamine is the substrate; GTP has no effect on the reaction when ammonia is the substrate. The allosteric effector GTP functions by stabilizing the protein conformation that binds the tetrahedral intermediate(s) formed during glutamine hydrolysis. Inhibited by the product CTP, via allosteric rather than competitive inhibition. Functionally, catalyzes the ATP-dependent amination of UTP to CTP with either L-glutamine or ammonia as the source of nitrogen. Regulates intracellular CTP levels through interactions with the four ribonucleotide triphosphates. The polypeptide is CTP synthase (Chlamydia trachomatis serovar A (strain ATCC VR-571B / DSM 19440 / HAR-13)).